The chain runs to 203 residues: A-type ATP synthase subunit E (203 aa).

Belongs to the V-ATPase E subunit family. Has multiple subunits with at least A(3), B(3), C, D, E, F, H, I and proteolipid K(x).

It is found in the cell membrane. In terms of biological role, component of the A-type ATP synthase that produces ATP from ADP in the presence of a proton gradient across the membrane. This Thermococcus kodakarensis (strain ATCC BAA-918 / JCM 12380 / KOD1) (Pyrococcus kodakaraensis (strain KOD1)) protein is A-type ATP synthase subunit E.